Here is a 487-residue protein sequence, read N- to C-terminus: Histamine H1 receptor (487 aa).

The Extracellular portion of the chain corresponds to 1–29 (MSLPNSSCLLEDKMCEGNKTTMASPQLMP). N-linked (GlcNAc...) asparagine glycans are attached at residues N5 and N18. Residues 30 to 50 (LVVVLSTICLVTVGLNLLVLY) form a helical membrane-spanning segment. Residues 51 to 64 (AVRSERKLHTVGNL) lie on the Cytoplasmic side of the membrane. The chain crosses the membrane as a helical span at residues 65 to 89 (YIVSLSVADLIVGAVVMPMNILYLL). Over 90 to 97 (MSKWSLGR) the chain is Extracellular. The chain crosses the membrane as a helical span at residues 98-123 (PLCLFWLSMDYVASTASIFSVFILCI). The cysteines at positions 100 and 180 are disulfide-linked. Histamine contacts are provided by D107 and T112. The segment at 107 to 112 (DYVAST) is important for agonist binding. Over 124-144 (DRYRSVQQPLRYLKYRTKTRA) the chain is Cytoplasmic. 2 positions are modified to phosphothreonine: T140 and T142. A helical membrane pass occupies residues 145–164 (SATILGAWFLSFLWVIPILG). At 165 to 188 (WNHFMQQTSVRREDKCETDFYDVT) the chain is on the extracellular side. The helical transmembrane segment at 189 to 211 (WFKVMTAIINFYLPTLLMLWFYA) threads the bilayer. A histamine-binding site is contributed by N198. Topologically, residues 212–416 (KIYKAVRQHC…MNRERKAAKQ (205 aa)) are cytoplasmic. Phosphoserine is present on S230. A compositionally biased stretch (basic and acidic residues) spans 238 to 261 (KLRPENPKGDAKKPGKESPWEVLK). Residues 238–291 (KLRPENPKGDAKKPGKESPWEVLKRKPKDAGGGSVLKSPSQTPKEMKSPVVFSQ) form a disordered region. Residue T279 is modified to Phosphothreonine. 2 positions are modified to phosphoserine: S344 and S347. Positions 345–379 (EISEDQMLGDSQSFSRTDSDTTTETAPGKGKLRSG) are disordered. Residues 353 to 369 (GDSQSFSRTDSDTTTET) show a composition bias toward polar residues. Phosphoserine occurs at positions 380, 396, and 398. Residues 417–440 (LGFIMAAFILCWIPYFIFFMVIAF) traverse the membrane as a helical segment. An important for agonist binding region spans residues 424–428 (FILCW). Y431 is a binding site for histamine. An intrachain disulfide couples C441 to C444. Residues 441-446 (CKNCCN) are Extracellular-facing. A helical transmembrane segment spans residues 447-469 (EHLHMFTIWLGYINSTLNPLIYP). Over 470 to 487 (LCNENFKKTFKRILHIRS) the chain is Cytoplasmic.

This sequence belongs to the G-protein coupled receptor 1 family. Phosphorylation at sites in the second and third cytoplasmic loops independently contribute to agonist-induced receptor down-regulation.

It is found in the cell membrane. In terms of biological role, G-protein-coupled receptor for histamine, a biogenic amine that functions as an immune modulator and a neurotransmitter. Through the H1 receptor, histamine mediates the contraction of smooth muscles and increases capillary permeability due to contraction of terminal venules. Also mediates neurotransmission in the central nervous system and thereby regulates circadian rhythms, emotional and locomotor activities as well as cognitive functions. This chain is Histamine H1 receptor, found in Homo sapiens (Human).